Here is a 381-residue protein sequence, read N- to C-terminus: Pyrimidine monooxygenase RutA (381 aa).

FMN is bound by residues 66–67, asparagine 132, glutamate 141, 157–158, and serine 207; these read IK and RY.

The protein belongs to the NtaA/SnaA/DszA monooxygenase family. RutA subfamily.

The enzyme catalyses uracil + FMNH2 + NADH + O2 = (Z)-3-ureidoacrylate + FMN + NAD(+) + H2O + H(+). It catalyses the reaction thymine + FMNH2 + NADH + O2 = (Z)-2-methylureidoacrylate + FMN + NAD(+) + H2O + H(+). In terms of biological role, catalyzes the pyrimidine ring opening between N-3 and C-4 by an unusual flavin hydroperoxide-catalyzed mechanism, adding oxygen atoms in the process to yield ureidoacrylate peracid, that immediately reacts with FMN forming ureidoacrylate and FMN-N(5)-oxide. The FMN-N(5)-oxide reacts spontaneously with NADH to produce FMN. Requires the flavin reductase RutF to regenerate FMN in vivo. The chain is Pyrimidine monooxygenase RutA from Methylobacterium radiotolerans (strain ATCC 27329 / DSM 1819 / JCM 2831 / NBRC 15690 / NCIMB 10815 / 0-1).